The chain runs to 166 residues: 3-isopropylmalate dehydratase small subunit (166 aa).

Belongs to the LeuD family. LeuD type 2 subfamily. In terms of assembly, heterodimer of LeuC and LeuD.

The catalysed reaction is (2R,3S)-3-isopropylmalate = (2S)-2-isopropylmalate. It participates in amino-acid biosynthesis; L-leucine biosynthesis; L-leucine from 3-methyl-2-oxobutanoate: step 2/4. Its function is as follows. Catalyzes the isomerization between 2-isopropylmalate and 3-isopropylmalate, via the formation of 2-isopropylmaleate. The polypeptide is 3-isopropylmalate dehydratase small subunit (Moorella thermoacetica (strain ATCC 39073 / JCM 9320)).